A 118-amino-acid chain; its full sequence is Non-specific lipid-transfer protein 2 (118 aa).

Positions 1-25 are cleaved as a signal peptide; the sequence is MAGVMKLACMVLACMIVAGPITANA. 4 disulfides stabilise this stretch: C29–C76, C39–C53, C54–C100, and C74–C114.

It belongs to the plant LTP family.

Functionally, plant non-specific lipid-transfer proteins transfer phospholipids as well as galactolipids across membranes. May play a role in wax or cutin deposition in the cell walls of expanding epidermal cells and certain secretory tissues. The chain is Non-specific lipid-transfer protein 2 (LTP2) from Arabidopsis thaliana (Mouse-ear cress).